Here is a 300-residue protein sequence, read N- to C-terminus: Phosphoribosylaminoimidazole-succinocarboxamide synthase (300 aa).

This sequence belongs to the SAICAR synthetase family.

It catalyses the reaction 5-amino-1-(5-phospho-D-ribosyl)imidazole-4-carboxylate + L-aspartate + ATP = (2S)-2-[5-amino-1-(5-phospho-beta-D-ribosyl)imidazole-4-carboxamido]succinate + ADP + phosphate + 2 H(+). It participates in purine metabolism; IMP biosynthesis via de novo pathway; 5-amino-1-(5-phospho-D-ribosyl)imidazole-4-carboxamide from 5-amino-1-(5-phospho-D-ribosyl)imidazole-4-carboxylate: step 1/2. In Methylibium petroleiphilum (strain ATCC BAA-1232 / LMG 22953 / PM1), this protein is Phosphoribosylaminoimidazole-succinocarboxamide synthase.